Consider the following 63-residue polypeptide: uncharacterized protein (63 aa).

Transmembrane regions (helical) follow at residues 3–23 (VFLI…VYYI) and 42–62 (ALVC…TKLL).

It is found in the cell membrane. This is an uncharacterized protein from Bacillus subtilis (strain 168).